A 114-amino-acid chain; its full sequence is MAPKKDKAPPPSSKPAKSGGKQKKKKWSKGKQKEKVNNLVLFDNATFDKLLSEAGKQKVVTAATLSERFRINGSLARRAIRELVSRGAIKMVCHHSSLQIYTRSTNEKVNPTAA.

Residues 1–33 (MAPKKDKAPPPSSKPAKSGGKQKKKKWSKGKQK) form a disordered region. Over residues 20-30 (GKQKKKKWSKG) the composition is skewed to basic residues.

The protein belongs to the eukaryotic ribosomal protein eS25 family.

The chain is Small ribosomal subunit protein eS25 (RPS25) from Amaranthus cruentus (Purple amaranth).